Consider the following 360-residue polypeptide: 3-dehydroquinate synthase (360 aa).

NAD(+)-binding positions include 71-76, 105-109, 129-130, Lys-142, Lys-151, and 169-172; these read DGEQYK, GVVGD, TT, and TLNT. Residues Glu-184, His-248, and His-265 each contribute to the Zn(2+) site.

The protein belongs to the sugar phosphate cyclases superfamily. Dehydroquinate synthase family. It depends on Co(2+) as a cofactor. Requires Zn(2+) as cofactor. NAD(+) is required as a cofactor.

The protein localises to the cytoplasm. It catalyses the reaction 7-phospho-2-dehydro-3-deoxy-D-arabino-heptonate = 3-dehydroquinate + phosphate. The protein operates within metabolic intermediate biosynthesis; chorismate biosynthesis; chorismate from D-erythrose 4-phosphate and phosphoenolpyruvate: step 2/7. In terms of biological role, catalyzes the conversion of 3-deoxy-D-arabino-heptulosonate 7-phosphate (DAHP) to dehydroquinate (DHQ). The polypeptide is 3-dehydroquinate synthase (Coxiella burnetii (strain RSA 331 / Henzerling II)).